The following is a 147-amino-acid chain: MWSLPPSRALSCAPLLLLFSFQFLVTYAWRFQEEEEWNDQKQIAVYLPPTLEFAVYTFNKQSKDWYAYKLVPVLASWKEQGYDKMTFSMNLQLGRTMCGKFEDDIDNCPFQESPELNNTCTCFFTIGIEPWRTRFDLWNKTCSGGHS.

Positions M1–A28 are cleaved as a signal peptide. C98 and C108 form a disulfide bridge. N-linked (GlcNAc...) asparagine glycans are attached at residues N117 and N139. A disulfide bond links C122 and C142.

Belongs to the cystatin family.

It is found in the secreted. The chain is Putative cystatin-9-like protein CST9LP1 (CST9LP1) from Homo sapiens (Human).